Consider the following 54-residue polypeptide: MASAIRNFPYPCFWKFVSMANRPIKTAGILGYGTPLLIRSFGISVIGIDNADKV.

This is an uncharacterized protein from Haemophilus influenzae (strain ATCC 51907 / DSM 11121 / KW20 / Rd).